The primary structure comprises 66 residues: Large ribosomal subunit protein bL33c (66 aa).

The protein belongs to the bacterial ribosomal protein bL33 family.

It localises to the plastid. The protein resides in the chloroplast. This chain is Large ribosomal subunit protein bL33c, found in Cicer arietinum (Chickpea).